The sequence spans 163 residues: Lipoprotein signal peptidase (163 aa).

Transmembrane regions (helical) follow at residues 4–24, 66–86, and 92–112; these read SAALFCRPVPAILFILSLLIL, LDAWVIVVMRLAIVAFVAWLW, and DHQFAHLGYCLIIAGAFGNII. Residues Asp-122 and Asp-140 contribute to the active site. A helical transmembrane segment spans residues 132 to 152; sequence SFAVFNLADSLITIGAGFILL.

Belongs to the peptidase A8 family.

It is found in the cell inner membrane. The catalysed reaction is Release of signal peptides from bacterial membrane prolipoproteins. Hydrolyzes -Xaa-Yaa-Zaa-|-(S,diacylglyceryl)Cys-, in which Xaa is hydrophobic (preferably Leu), and Yaa (Ala or Ser) and Zaa (Gly or Ala) have small, neutral side chains.. The protein operates within protein modification; lipoprotein biosynthesis (signal peptide cleavage). This protein specifically catalyzes the removal of signal peptides from prolipoproteins. This Allorhizobium ampelinum (strain ATCC BAA-846 / DSM 112012 / S4) (Agrobacterium vitis (strain S4)) protein is Lipoprotein signal peptidase.